Consider the following 52-residue polypeptide: Inducible serine protease inhibitor 2 (52 aa).

The region spanning 5–52 (CTLPLETGICRAELHRFGYDTKLKECTQFVYGGCHHNENNFKKLEVCR) is the BPTI/Kunitz inhibitor domain. Intrachain disulfides connect Cys-14–Cys-38 and Cys-30–Cys-51.

In terms of biological role, inhibits trypsin and the toxin protease PR2 of M.anisopliae. Does not inhibit chymotrypsin, subtilisin Carlsberg, proteinase K, porcine pancreatic elastase and the toxin protease PR1 of M.anisopliae. In Galleria mellonella (Greater wax moth), this protein is Inducible serine protease inhibitor 2.